The chain runs to 278 residues: DNA repair protein RecO (278 aa).

Residues 1–12 are compositionally biased toward polar residues; sequence MGTNDALTSTED. The interval 1–42 is disordered; sequence MGTNDALTSTEDAVTAGANDAPLPAPPEPPRKARRATSRTSD.

This sequence belongs to the RecO family.

Its function is as follows. Involved in DNA repair and RecF pathway recombination. The polypeptide is DNA repair protein RecO (Burkholderia lata (strain ATCC 17760 / DSM 23089 / LMG 22485 / NCIMB 9086 / R18194 / 383)).